A 397-amino-acid chain; its full sequence is Acetate kinase 2 (397 aa).

N10 is a Mg(2+) binding site. K17 contacts ATP. Residue R90 coordinates substrate. The active-site Proton donor/acceptor is D147. ATP contacts are provided by residues 207 to 211 (HLGNG), 281 to 283 (DAR), and 329 to 333 (GIGEN). Position 385 (E385) interacts with Mg(2+).

The protein belongs to the acetokinase family. Homodimer. The cofactor is Mg(2+). Mn(2+) is required as a cofactor.

Its subcellular location is the cytoplasm. The catalysed reaction is acetate + ATP = acetyl phosphate + ADP. The protein operates within metabolic intermediate biosynthesis; acetyl-CoA biosynthesis; acetyl-CoA from acetate: step 1/2. Functionally, catalyzes the formation of acetyl phosphate from acetate and ATP. Can also catalyze the reverse reaction. This Vibrio parahaemolyticus serotype O3:K6 (strain RIMD 2210633) protein is Acetate kinase 2.